Reading from the N-terminus, the 45-residue chain is uncharacterized protein (45 aa).

The chain crosses the membrane as a helical span at residues Ile5–Ser25.

It localises to the membrane. This is an uncharacterized protein from Haemophilus influenzae (strain ATCC 51907 / DSM 11121 / KW20 / Rd).